Reading from the N-terminus, the 688-residue chain is Translation initiation factor IF-2 (688 aa).

The tract at residues 62–103 (EFEVEEKVVRSKKNSNKKKKKGKGNEDKRQDNFAGRQQTQIV) is disordered. Positions 71 to 83 (RSKKNSNKKKKKG) are enriched in basic residues. Positions 190-359 (ERPAVVTIMG…LLVSEVEEYK (170 aa)) constitute a tr-type G domain. The tract at residues 199-206 (GHVDHGKT) is G1. GTP is bound at residue 199 to 206 (GHVDHGKT). Residues 224 to 228 (GITQH) are G2. A G3 region spans residues 245–248 (DTPG). Residues 245-249 (DTPGH) and 299-302 (NKMD) each bind GTP. A G4 region spans residues 299 to 302 (NKMD). Positions 335–337 (SAI) are G5.

Belongs to the TRAFAC class translation factor GTPase superfamily. Classic translation factor GTPase family. IF-2 subfamily.

The protein resides in the cytoplasm. In terms of biological role, one of the essential components for the initiation of protein synthesis. Protects formylmethionyl-tRNA from spontaneous hydrolysis and promotes its binding to the 30S ribosomal subunits. Also involved in the hydrolysis of GTP during the formation of the 70S ribosomal complex. This chain is Translation initiation factor IF-2, found in Bacillus cereus (strain G9842).